The sequence spans 178 residues: ATP synthase subunit delta (178 aa).

Belongs to the ATPase delta chain family. In terms of assembly, F-type ATPases have 2 components, F(1) - the catalytic core - and F(0) - the membrane proton channel. F(1) has five subunits: alpha(3), beta(3), gamma(1), delta(1), epsilon(1). F(0) has three main subunits: a(1), b(2) and c(10-14). The alpha and beta chains form an alternating ring which encloses part of the gamma chain. F(1) is attached to F(0) by a central stalk formed by the gamma and epsilon chains, while a peripheral stalk is formed by the delta and b chains.

It localises to the cell membrane. In terms of biological role, f(1)F(0) ATP synthase produces ATP from ADP in the presence of a proton or sodium gradient. F-type ATPases consist of two structural domains, F(1) containing the extramembraneous catalytic core and F(0) containing the membrane proton channel, linked together by a central stalk and a peripheral stalk. During catalysis, ATP synthesis in the catalytic domain of F(1) is coupled via a rotary mechanism of the central stalk subunits to proton translocation. Its function is as follows. This protein is part of the stalk that links CF(0) to CF(1). It either transmits conformational changes from CF(0) to CF(1) or is implicated in proton conduction. The polypeptide is ATP synthase subunit delta (Streptococcus pyogenes serotype M4 (strain MGAS10750)).